A 140-amino-acid polypeptide reads, in one-letter code: PGPRVRRKANDFLHRGEYSVCDSEEHWVGNLTQATDLRGNEVTVLPHVRINNVVKKQMFYETTCRVSKPIGAPKPGQGVSGVKAGTSSCRGIDNEHWNSYCTNVHTFVRALTSYKNQIAWRFIRINAACVCVLSRNSWRH.

A propeptide spanning residues 1-7 (PGPRVRR) is cleaved from the precursor. 3 disulfide bridges follow: Cys21/Cys101, Cys64/Cys129, and Cys89/Cys131.

This sequence belongs to the NGF-beta family.

It is found in the secreted. This is Neurotrophin-7 (ntf7) from Cyprinus carpio (Common carp).